The chain runs to 506 residues: Zinc finger and SCAN domain containing protein 4D (506 aa).

In terms of domain architecture, SCAN box spans 37 to 119 (SAQLNFSPSN…RFMESLTDEC (83 aa)). The tract at residues 238-264 (SQGNSSHHVDFRSAPTPADVPMEEQPK) is disordered. C2H2-type zinc fingers lie at residues 395–417 (FKCE…QRTH), 424–446 (LLCV…EIIH), 452–474 (FKCS…EMIH), and 480–503 (YVCS…RNYH).

Highly expressed at the 2-cell stage but its expression is rapidly turned off.

The protein resides in the nucleus. The protein localises to the chromosome. It is found in the telomere. Functionally, transcription factor required to regulate early development. Binds telomeres and plays a key role in genomic stability by regulating telomere elongation. Acts as an activator of spontaneous telomere sister chromatid exchange (T-SCE) and telomere elongation. The chain is Zinc finger and SCAN domain containing protein 4D (Zscan4d) from Mus musculus (Mouse).